We begin with the raw amino-acid sequence, 372 residues long: Anhydro-N-acetylmuramic acid kinase (372 aa).

ATP is bound at residue 14–21 (GTSLDGVD).

The protein belongs to the anhydro-N-acetylmuramic acid kinase family.

It carries out the reaction 1,6-anhydro-N-acetyl-beta-muramate + ATP + H2O = N-acetyl-D-muramate 6-phosphate + ADP + H(+). Its pathway is amino-sugar metabolism; 1,6-anhydro-N-acetylmuramate degradation. It participates in cell wall biogenesis; peptidoglycan recycling. In terms of biological role, catalyzes the specific phosphorylation of 1,6-anhydro-N-acetylmuramic acid (anhMurNAc) with the simultaneous cleavage of the 1,6-anhydro ring, generating MurNAc-6-P. Is required for the utilization of anhMurNAc either imported from the medium or derived from its own cell wall murein, and thus plays a role in cell wall recycling. This Photorhabdus laumondii subsp. laumondii (strain DSM 15139 / CIP 105565 / TT01) (Photorhabdus luminescens subsp. laumondii) protein is Anhydro-N-acetylmuramic acid kinase.